A 349-amino-acid polypeptide reads, in one-letter code: Secretory carrier-associated membrane protein 3 (349 aa).

Positions 1-90 (MAQSRDTGNP…EPRNYGSYST (90 aa)) are disordered. The Cytoplasmic portion of the chain corresponds to 1-168 (MAQSRDTGNP…PQEFQKTVST (168 aa)). At Ser32 the chain carries Phosphoserine. Thr37 is modified (phosphothreonine). A phosphotyrosine mark is found at Tyr41 and Tyr53. The segment covering 49–68 (PPPAYEPPAPAPAPLPPPSA) has biased composition (pro residues). Phosphoserine is present on residues Ser74 and Ser78. Phosphotyrosine is present on Tyr85. The residue at position 87 (Ser87) is a Phosphoserine. The next 4 membrane-spanning stretches (helical) occupy residues 169-189 (MYYL…ACLA), 200-220 (GFGL…VCWY), 236-256 (FVFF…AIGI), and 277-297 (VAVL…LGIV). At 298-349 (MLKRIHSLYRQTGASFQKAQQEFAAGVFSNPAVRTAAANAAAGAAENAFRAP) the chain is on the cytoplasmic side. A Glycyl lysine isopeptide (Lys-Gly) (interchain with G-Cter in SUMO1) cross-link involves residue Lys315.

It belongs to the SCAMP family. Interacts with NEDD4 and NEDD4L and TSG101. Interacts with RNF126. In terms of processing, monoubiquitinated.

It is found in the membrane. In terms of biological role, functions in post-Golgi recycling pathways. Acts as a recycling carrier to the cell surface. The protein is Secretory carrier-associated membrane protein 3 (Scamp3) of Mus musculus (Mouse).